The following is a 219-amino-acid chain: Ribonuclease HII (219 aa).

The RNase H type-2 domain occupies 10–219 (HLEAGTDEAG…LLPEQTVLDL (210 aa)). A divalent metal cation-binding residues include Asp-16, Glu-17, and Asp-108.

It belongs to the RNase HII family. The cofactor is Mn(2+). Mg(2+) serves as cofactor.

The protein resides in the cytoplasm. The enzyme catalyses Endonucleolytic cleavage to 5'-phosphomonoester.. Endonuclease that specifically degrades the RNA of RNA-DNA hybrids. In Flavobacterium psychrophilum (strain ATCC 49511 / DSM 21280 / CIP 103535 / JIP02/86), this protein is Ribonuclease HII.